The following is a 176-amino-acid chain: Putative ribosomal protein eS10-like (176 aa).

Residues threonine 104–glutamine 176 form a disordered region. Basic and acidic residues predominate over residues serine 108–arginine 139.

This sequence belongs to the eukaryotic ribosomal protein eS10 family.

The chain is Putative ribosomal protein eS10-like (RPS10P5) from Homo sapiens (Human).